Reading from the N-terminus, the 365-residue chain is MELDFGHFDERDKASRNMRGSRMNGLPSPTHSAHCSFYRTRTLQALSNEKKAKKVRFYRNGDRYFKGIVYAVSSDRFRSFDALLADLTRSLSDNINLLQGVRYIYTIDGSRKIGSMDELEEGESYVCSSDNFFKKVEYTKNVNPNWSVNVKTSANMKAPQSLASSNSAQARENKDFVRPKLVTIIRSGVKPRKAVRVLLNKKTAHSFEQVLTDITEAIKLETGVVKKLYTLDGKQVTCLHDFFGDDDVFIACGPEKFRYAQDDFSLDENECRVMKGNPSATAGPKASPTPQKTSAKSPGPMRRSKSPADSGNDQDANGTSSSQLSTPKSKQSPISTPTSPGSLRKHKDLYLPLSLDDSDSLGDSM.

S28 bears the Phosphoserine; by CDK5 mark. Position 47 is a phosphoserine; by MARK1 and PKA (S47). Doublecortin domains follow at residues 53–139 (KKVR…VEYT) and 180–263 (KLVT…AQDD). Residue Y70 is modified to Phosphotyrosine; by ABL. S74 is modified (phosphoserine; by PKC). S90 is modified (phosphoserine; by CK2). At S110 the chain carries Phosphoserine; by PKC. A Phosphoserine; by CK2, MARK1 and PKA modification is found at S115. The residue at position 265 (S265) is a Phosphoserine; by CK2. A disordered region spans residues 275–365 (KGNPSATAGP…DDSDSLGDSM (91 aa)). S287 is subject to Phosphoserine; by CDK5. Phosphothreonine; by CDK5 is present on T289. Residue S294 is modified to Phosphoserine; by PKC. Residue S297 is modified to Phosphoserine; by CDK5. S306 carries the post-translational modification Phosphoserine; by CK2. S306 is modified (phosphoserine; by DYRK2). Polar residues predominate over residues 307 to 341 (PADSGNDQDANGTSSSQLSTPKSKQSPISTPTSPG). T326 carries the post-translational modification Phosphothreonine; by CDK5. At T326 the chain carries Phosphothreonine; by PKC and MAPK. Residue S332 is modified to Phosphoserine; by CDK5. S332 carries the post-translational modification Phosphoserine; by MAPK. T336 bears the Phosphothreonine; by MAPK mark. S339 carries the phosphoserine; by CDK5 modification. S339 is subject to Phosphoserine; by MAPK. Phosphoserine; by PKC is present on S342. A phosphoserine; by CK2 mark is found at S354 and S360. Residues 356-365 (DDSDSLGDSM) are compositionally biased toward acidic residues.

As to quaternary structure, interacts with tubulin. Interacts with USP9X. Phosphorylation by MARK1, MARK2 and PKA regulates its ability to bind microtubules. Phosphorylation at Ser-265 and Ser-297 seems to occur only in neonatal brain, the levels falling precipitously by postnatal day 21. In terms of processing, ubiquitinated by MDM2, leading to its degradation by the proteasome. Ubiquitinated by MDM2 and subsequent degradation leads to reduce the dendritic spine density of olfactory bulb granule cells.

It is found in the cytoplasm. The protein localises to the cell projection. It localises to the neuron projection. Microtubule-associated protein required for initial steps of neuronal dispersion and cortex lamination during cerebral cortex development. May act by competing with the putative neuronal protein kinase DCLK1 in binding to a target protein. May in that way participate in a signaling pathway that is crucial for neuronal interaction before and during migration, possibly as part of a calcium ion-dependent signal transduction pathway. May participate along with PAFAH1B1/LIS-1 in a distinct overlapping signaling pathway that promotes neuronal migration. In Rattus norvegicus (Rat), this protein is Neuronal migration protein doublecortin (Dcx).